Here is a 363-residue protein sequence, read N- to C-terminus: UDP-N-acetylglucosamine--N-acetylmuramyl-(pentapeptide) pyrophosphoryl-undecaprenol N-acetylglucosamine transferase (363 aa).

UDP-N-acetyl-alpha-D-glucosamine contacts are provided by residues T7–G9, N125, S196, I251, and Q296.

Belongs to the glycosyltransferase 28 family. MurG subfamily.

The protein resides in the cell membrane. It carries out the reaction Mur2Ac(oyl-L-Ala-gamma-D-Glu-L-Lys-D-Ala-D-Ala)-di-trans,octa-cis-undecaprenyl diphosphate + UDP-N-acetyl-alpha-D-glucosamine = beta-D-GlcNAc-(1-&gt;4)-Mur2Ac(oyl-L-Ala-gamma-D-Glu-L-Lys-D-Ala-D-Ala)-di-trans,octa-cis-undecaprenyl diphosphate + UDP + H(+). Its pathway is cell wall biogenesis; peptidoglycan biosynthesis. Functionally, cell wall formation. Catalyzes the transfer of a GlcNAc subunit on undecaprenyl-pyrophosphoryl-MurNAc-pentapeptide (lipid intermediate I) to form undecaprenyl-pyrophosphoryl-MurNAc-(pentapeptide)GlcNAc (lipid intermediate II). In Latilactobacillus sakei subsp. sakei (strain 23K) (Lactobacillus sakei subsp. sakei), this protein is UDP-N-acetylglucosamine--N-acetylmuramyl-(pentapeptide) pyrophosphoryl-undecaprenol N-acetylglucosamine transferase.